The following is a 175-amino-acid chain: Colicin-B immunity protein (175 aa).

Helical transmembrane passes span Ile-14–Leu-32, Cys-104–Tyr-121, and Ile-149–Ile-168.

The protein localises to the cell inner membrane. In terms of biological role, this protein is able to protect a cell, which harbors the plasmid ColB encoding colicin B, against colicin B. This is Colicin-B immunity protein (cbi) from Escherichia coli.